Reading from the N-terminus, the 454-residue chain is Bifunctional protein GlmU (454 aa).

The tract at residues methionine 1–arginine 226 is pyrophosphorylase. UDP-N-acetyl-alpha-D-glucosamine is bound by residues leucine 8–glycine 11, lysine 22, glutamine 73, glycine 78–threonine 79, tyrosine 99–aspartate 101, glycine 136, glutamate 151, asparagine 166, and asparagine 224. Aspartate 101 lines the Mg(2+) pocket. Residue asparagine 224 participates in Mg(2+) binding. The interval methionine 227–glutamine 247 is linker. The segment at glycine 248–lysine 454 is N-acetyltransferase. Residues arginine 330 and lysine 348 each contribute to the UDP-N-acetyl-alpha-D-glucosamine site. Catalysis depends on histidine 360, which acts as the Proton acceptor. Residues tyrosine 363 and asparagine 374 each contribute to the UDP-N-acetyl-alpha-D-glucosamine site. Acetyl-CoA contacts are provided by residues alanine 377, asparagine 383–tyrosine 384, serine 402, alanine 420, and arginine 437.

In the N-terminal section; belongs to the N-acetylglucosamine-1-phosphate uridyltransferase family. It in the C-terminal section; belongs to the transferase hexapeptide repeat family. As to quaternary structure, homotrimer. It depends on Mg(2+) as a cofactor.

The protein resides in the cytoplasm. It carries out the reaction alpha-D-glucosamine 1-phosphate + acetyl-CoA = N-acetyl-alpha-D-glucosamine 1-phosphate + CoA + H(+). The catalysed reaction is N-acetyl-alpha-D-glucosamine 1-phosphate + UTP + H(+) = UDP-N-acetyl-alpha-D-glucosamine + diphosphate. Its pathway is nucleotide-sugar biosynthesis; UDP-N-acetyl-alpha-D-glucosamine biosynthesis; N-acetyl-alpha-D-glucosamine 1-phosphate from alpha-D-glucosamine 6-phosphate (route II): step 2/2. It participates in nucleotide-sugar biosynthesis; UDP-N-acetyl-alpha-D-glucosamine biosynthesis; UDP-N-acetyl-alpha-D-glucosamine from N-acetyl-alpha-D-glucosamine 1-phosphate: step 1/1. It functions in the pathway bacterial outer membrane biogenesis; LPS lipid A biosynthesis. In terms of biological role, catalyzes the last two sequential reactions in the de novo biosynthetic pathway for UDP-N-acetylglucosamine (UDP-GlcNAc). The C-terminal domain catalyzes the transfer of acetyl group from acetyl coenzyme A to glucosamine-1-phosphate (GlcN-1-P) to produce N-acetylglucosamine-1-phosphate (GlcNAc-1-P), which is converted into UDP-GlcNAc by the transfer of uridine 5-monophosphate (from uridine 5-triphosphate), a reaction catalyzed by the N-terminal domain. The sequence is that of Bifunctional protein GlmU from Pseudomonas paraeruginosa (strain DSM 24068 / PA7) (Pseudomonas aeruginosa (strain PA7)).